Consider the following 396-residue polypeptide: Bifunctional enzyme Fae/Hps (396 aa).

Residues 1-161 (MYQIGEALIG…YEKDRGVHAI (161 aa)) form a formaldehyde-activating enzyme region. Residue histidine 17 is the Proton donor of the active site. Positions 19, 48, 66, 68, and 83 each coordinate substrate. The 3-hexulose-6-phosphate synthase stretch occupies residues 162–396 (MGYKITRLWD…IDQYRIMTDF (235 aa)).

The protein in the N-terminal section; belongs to the formaldehyde-activating enzyme family. It in the C-terminal section; belongs to the HPS/KGPDC family. HPS subfamily.

It carries out the reaction 5,6,7,8-tetrahydromethanopterin + formaldehyde = 5,10-methylenetetrahydromethanopterin + H2O. The enzyme catalyses D-ribulose 5-phosphate + formaldehyde = D-arabino-hex-3-ulose 6-phosphate. The protein operates within carbohydrate biosynthesis; D-ribose 5-phosphate biosynthesis. Functionally, catalyzes the condensation of formaldehyde with tetrahydromethanopterin (H(4)MPT) to 5,10-methylenetetrahydromethanopterin. In terms of biological role, catalyzes the reversible formation of ribulose-5-phosphate and formaldehyde from 3-hexulose-6-phosphate. The chain is Bifunctional enzyme Fae/Hps from Methanocella arvoryzae (strain DSM 22066 / NBRC 105507 / MRE50).